Reading from the N-terminus, the 246-residue chain is MQALLFLMALLLPSRAGAEEIIGGVESEPHSRPYMAYVNTFSKKGYVAICGGFLIAPQFVMTAAHCSGRRMTVTLGAHNVRKRECTQQKIKVEKYILPPNYNVSSKFNDIVLLKLKKQANLTSAVDVVPLPGPSDFAKPGTMCWAAGWGRTGVKKSISHTLREVELKIVGEKACKIFRHYKDSLQICVGSSTKVASVYMGDSGGPLLCAGVAHGIVSSGRGNAKPPAIFTRISPHVPWINRVIKGE.

The signal sequence occupies residues 1–18; it reads MQALLFLMALLLPSRAGA. Residues 19–20 constitute a propeptide, activation peptide; that stretch reads EE. Residues 21–244 form the Peptidase S1 domain; sequence IIGGVESEPH…HVPWINRVIK (224 aa). Residues C50 and C66 are joined by a disulfide bond. Active-site charge relay system residues include H65 and D109. 2 cysteine pairs are disulfide-bonded: C143–C208 and C174–C187. Catalysis depends on S202, which acts as the Charge relay system.

Belongs to the peptidase S1 family. Granzyme subfamily. As to expression, selectively expressed in uterine mast cells.

The sequence is that of Mast cell protease 9 (Mcpt9) from Mus musculus (Mouse).